The following is a 124-amino-acid chain: MARLVGVDLPRDKRMEIALTYIYGIGRTRSKEILAATGISPEQRSKDLTDDQVTQLREYIEATLKVEGDLRREVQADIRRKIEIGCYQGLRHRRGLPVRGQRTKTNARTRKGPKRTIAGKKKAR.

The disordered stretch occupies residues 95-124 (GLPVRGQRTKTNARTRKGPKRTIAGKKKAR).

This sequence belongs to the universal ribosomal protein uS13 family. Part of the 30S ribosomal subunit. Forms a loose heterodimer with protein S19. Forms two bridges to the 50S subunit in the 70S ribosome.

Its function is as follows. Located at the top of the head of the 30S subunit, it contacts several helices of the 16S rRNA. In the 70S ribosome it contacts the 23S rRNA (bridge B1a) and protein L5 of the 50S subunit (bridge B1b), connecting the 2 subunits; these bridges are implicated in subunit movement. Contacts the tRNAs in the A and P-sites. This chain is Small ribosomal subunit protein uS13, found in Mycobacteroides abscessus (strain ATCC 19977 / DSM 44196 / CCUG 20993 / CIP 104536 / JCM 13569 / NCTC 13031 / TMC 1543 / L948) (Mycobacterium abscessus).